Consider the following 394-residue polypeptide: Protein arginine N-methyltransferase 8 (394 aa).

Gly-2 is lipidated: N-myristoyl glycine. A disordered region spans residues 16–40 (MAENAAESTEVNSPPSQPPQPVVPA). 2 short sequence motifs (SH3-binding) span residues 29–42 (PPSQ…PAKP) and 53–58 (PSCPGR). Residues 30 to 39 (PSQPPQPVVP) are compositionally biased toward pro residues. Arg-58 carries the post-translational modification Omega-N-methylarginine; by autocatalysis. Residue Arg-73 is modified to Asymmetric dimethylarginine; by autocatalysis. The 322-residue stretch at 73–394 (RDYYFDSYAH…TSVSNDYKMR (322 aa)) folds into the SAM-dependent MTase PRMT-type domain. Residues His-86, Arg-95, Gly-119, 119–122 (GSGT), Glu-141, and Glu-170 each bind S-adenosyl-L-methionine. Catalysis depends on residues Glu-185 and Glu-194.

It belongs to the class I-like SAM-binding methyltransferase superfamily. Protein arginine N-methyltransferase family. PRMT8 subfamily. In terms of assembly, homodimer. Tetramer; individual homodimers associates to form a homotetramer. Homooctamer; individual homodimers associates to form a homooctamer and homooligomerization is required for proper localization to the cell membrane. Heterodimer with PRMT1; heterodimerization may recruit PRMT1 activity to the plasma membrane. Interacts with PRMT2 (via the SH3 domain). Interacts with FYN (via the SH3 domain). Interacts with EWS; independently of EWS methylation status. In terms of tissue distribution, brain-specific.

It localises to the cell membrane. The catalysed reaction is L-arginyl-[protein] + S-adenosyl-L-methionine = N(omega)-methyl-L-arginyl-[protein] + S-adenosyl-L-homocysteine + H(+). It carries out the reaction L-arginyl-[protein] + 2 S-adenosyl-L-methionine = N(omega),N(omega)-dimethyl-L-arginyl-[protein] + 2 S-adenosyl-L-homocysteine + 2 H(+). In terms of biological role, S-adenosyl-L-methionine-dependent and membrane-associated arginine methyltransferase that can both catalyze the formation of omega-N monomethylarginine (MMA) and asymmetrical dimethylarginine (aDMA) in proteins such as NIFK, myelin basic protein, histone H4, H2A and H2A/H2B dimer. Able to mono- and dimethylate EWS protein; however its precise role toward EWS remains unclear as it still interacts with fully methylated EWS. The chain is Protein arginine N-methyltransferase 8 from Homo sapiens (Human).